A 98-amino-acid polypeptide reads, in one-letter code: Putative pterin-4-alpha-carbinolamine dehydratase (98 aa).

Belongs to the pterin-4-alpha-carbinolamine dehydratase family.

The catalysed reaction is (4aS,6R)-4a-hydroxy-L-erythro-5,6,7,8-tetrahydrobiopterin = (6R)-L-erythro-6,7-dihydrobiopterin + H2O. The sequence is that of Putative pterin-4-alpha-carbinolamine dehydratase from Roseobacter denitrificans (strain ATCC 33942 / OCh 114) (Erythrobacter sp. (strain OCh 114)).